The chain runs to 240 residues: Fibronectin type III domain-containing protein 5 (240 aa).

Positions 1 to 10 (MQAARGGAGR) are enriched in gly residues. Residues 1–30 (MQAARGGAGRPGREGRGLERECERSPGVGA) form a disordered region. Basic and acidic residues predominate over residues 11–24 (PGREGRGLERECER). In terms of domain architecture, Fibronectin type-III spans 64 to 155 (APVNVTVRHL…EPVLFKTPRE (92 aa)). 2 N-linked (GlcNAc...) asparagine glycosylation sites follow: Asn67 and Asn112. Residues 181–201 (GEVLIIVVVLFMWAGVIALFC) form a helical membrane-spanning segment. Basic and acidic residues predominate over residues 210–221 (NEPNNNKEKTKS). A disordered region spans residues 210 to 240 (NEPNNNKEKTKSASETSTPEHQGGGLLRSKI). Positions 231–240 (QGGGLLRSKI) are enriched in gly residues. The Microbody targeting signal signature appears at 238–240 (SKI).

As to quaternary structure, dimer; may exist in other oligomeric forms. N-Glycosylated. In terms of processing, the extracellular domain is cleaved and released from the cell membrane.

It localises to the cell membrane. It is found in the peroxisome membrane. The protein resides in the secreted. Functionally, mediates beneficial effects of muscular exercise. Induces browning of white adipose tissue by stimulating UCP1 expression, at least in part, via the nuclear receptor PPARA. This Rattus norvegicus (Rat) protein is Fibronectin type III domain-containing protein 5 (Fndc5).